Reading from the N-terminus, the 275-residue chain is MTRKIAFYGKGGIGKSTTQQNTAAAMAYYHGKKIFIHGCDPKADCTRLVLGGVAQTTIMDTLRELGEDAVTAENVINTGFDGIKCVESGGPEPGVGCAGRGVITAINLMEEMGAYSEDLDFIHFDVLGDVVCGGFAMPIREGKAQEVYIVASGEMMATYAANNICKGLLKYAEQSGVRLGGIICNSRRVDNELEMMEEFASALGTQLLYFVPRDNIVQKAEFNKKTVVEYDPTCNQALEYKELAKKILENDMFVIPKPLSMDQLEKMVERYGLMD.

9–16 (GKGGIGKS) contributes to the ATP binding site. C97 serves as a coordination point for [4Fe-4S] cluster. R100 is modified (ADP-ribosylarginine; by dinitrogenase reductase ADP-ribosyltransferase). C132 contacts [4Fe-4S] cluster.

It belongs to the NifH/BchL/ChlL family. As to quaternary structure, homodimer. [4Fe-4S] cluster serves as cofactor. In terms of processing, the reversible ADP-ribosylation of Arg-100 inactivates the nitrogenase reductase and regulates nitrogenase activity.

It carries out the reaction N2 + 8 reduced [2Fe-2S]-[ferredoxin] + 16 ATP + 16 H2O = H2 + 8 oxidized [2Fe-2S]-[ferredoxin] + 2 NH4(+) + 16 ADP + 16 phosphate + 6 H(+). The key enzymatic reactions in nitrogen fixation are catalyzed by the nitrogenase complex, which has 2 components: the iron protein and the molybdenum-iron protein. This chain is Nitrogenase iron protein 1 (nifH1), found in Methanosarcina barkeri.